A 387-amino-acid chain; its full sequence is Succinate--CoA ligase [ADP-forming] subunit beta (387 aa).

One can recognise an ATP-grasp domain in the interval 9–243; it reads KEILSTYGIP…YSQLDPLEIT (235 aa). ATP-binding positions include lysine 45, 52 to 54, glutamate 98, valine 101, and glutamate 106; that span reads GRG. Asparagine 198 and aspartate 212 together coordinate Mg(2+). Substrate is bound by residues asparagine 263 and 320-322; that span reads GIM.

This sequence belongs to the succinate/malate CoA ligase beta subunit family. In terms of assembly, heterotetramer of two alpha and two beta subunits. The cofactor is Mg(2+).

It carries out the reaction succinate + ATP + CoA = succinyl-CoA + ADP + phosphate. It catalyses the reaction GTP + succinate + CoA = succinyl-CoA + GDP + phosphate. It functions in the pathway carbohydrate metabolism; tricarboxylic acid cycle; succinate from succinyl-CoA (ligase route): step 1/1. Its function is as follows. Succinyl-CoA synthetase functions in the citric acid cycle (TCA), coupling the hydrolysis of succinyl-CoA to the synthesis of either ATP or GTP and thus represents the only step of substrate-level phosphorylation in the TCA. The beta subunit provides nucleotide specificity of the enzyme and binds the substrate succinate, while the binding sites for coenzyme A and phosphate are found in the alpha subunit. This is Succinate--CoA ligase [ADP-forming] subunit beta from Trichlorobacter lovleyi (strain ATCC BAA-1151 / DSM 17278 / SZ) (Geobacter lovleyi).